Consider the following 957-residue polypeptide: Glycine dehydrogenase (decarboxylating) (957 aa).

Lys708 is modified (N6-(pyridoxal phosphate)lysine).

It belongs to the GcvP family. The glycine cleavage system is composed of four proteins: P, T, L and H. It depends on pyridoxal 5'-phosphate as a cofactor.

It carries out the reaction N(6)-[(R)-lipoyl]-L-lysyl-[glycine-cleavage complex H protein] + glycine + H(+) = N(6)-[(R)-S(8)-aminomethyldihydrolipoyl]-L-lysyl-[glycine-cleavage complex H protein] + CO2. The glycine cleavage system catalyzes the degradation of glycine. The P protein binds the alpha-amino group of glycine through its pyridoxal phosphate cofactor; CO(2) is released and the remaining methylamine moiety is then transferred to the lipoamide cofactor of the H protein. In Salmonella heidelberg (strain SL476), this protein is Glycine dehydrogenase (decarboxylating).